Consider the following 526-residue polypeptide: Butyrophilin subfamily 1 member A1 (526 aa).

The N-terminal stretch at 1-26 (MAVFPSSGLPRCLLTLILLQLPKLDS) is a signal peptide. Ig-like V-type domains follow at residues 27 to 138 (APFD…ALVH) and 148 to 234 (PHIS…VEIS). Topologically, residues 27 to 242 (APFDVIGPPE…ISIPASSLPR (216 aa)) are extracellular. Intrachain disulfides connect Cys-50–Cys-124 and Cys-164–Cys-218. N-linked (GlcNAc...) asparagine glycans are attached at residues Asn-55 and Asn-215. Residues 243 to 269 (LTPWIVAVAVILMVLGLLTIGSIFFTW) form a helical membrane-spanning segment. Residues 270 to 526 (RLYNERPRER…IPTQPSQGAP (257 aa)) are Cytoplasmic-facing. A B30.2/SPRY domain is found at 285–479 (SKERLLEELK…LTICPIADGP (195 aa)). A disordered region spans residues 495 to 526 (IPLSPMGEDSAPRDADTLHSKLIPTQPSQGAP). The segment covering 504–513 (SAPRDADTLH) has biased composition (basic and acidic residues). The segment covering 517–526 (IPTQPSQGAP) has biased composition (polar residues).

It belongs to the immunoglobulin superfamily. BTN/MOG family. Seems to associate with xanthine dehydrogenase/oxidase. Post-translationally, N-glycosylated.

Its subcellular location is the membrane. It localises to the secreted. Functionally, may function in the secretion of milk-fat droplets. May act as a specific membrane-associated receptor for the association of cytoplasmic droplets with the apical plasma membrane. Inhibits the proliferation of CD4 and CD8 T-cells activated by anti-CD3 antibodies, T-cell metabolism and IL2 and IFNG secretion. The polypeptide is Butyrophilin subfamily 1 member A1 (BTN1A1) (Homo sapiens (Human)).